A 360-amino-acid polypeptide reads, in one-letter code: DNA replication and repair protein RecF (360 aa).

Residue 33-40 coordinates ATP; sequence GENGSGKT.

This sequence belongs to the RecF family.

It localises to the cytoplasm. In terms of biological role, the RecF protein is involved in DNA metabolism; it is required for DNA replication and normal SOS inducibility. RecF binds preferentially to single-stranded, linear DNA. It also seems to bind ATP. The polypeptide is DNA replication and repair protein RecF (Rickettsia africae (strain ESF-5)).